The sequence spans 36 residues: Photosystem II reaction center protein M (36 aa).

The helical transmembrane segment at 7–27 (GFVASLMFVLVPTVFLIVLFI) threads the bilayer.

Belongs to the PsbM family. As to quaternary structure, PSII is composed of 1 copy each of membrane proteins PsbA, PsbB, PsbC, PsbD, PsbE, PsbF, PsbH, PsbI, PsbJ, PsbK, PsbL, PsbM, PsbT, PsbX, PsbY, PsbZ, Psb30/Ycf12, peripheral proteins PsbO, CyanoQ (PsbQ), PsbU, PsbV and a large number of cofactors. It forms dimeric complexes.

The protein localises to the cellular thylakoid membrane. Its function is as follows. One of the components of the core complex of photosystem II (PSII). PSII is a light-driven water:plastoquinone oxidoreductase that uses light energy to abstract electrons from H(2)O, generating O(2) and a proton gradient subsequently used for ATP formation. It consists of a core antenna complex that captures photons, and an electron transfer chain that converts photonic excitation into a charge separation. This subunit is found at the monomer-monomer interface. The chain is Photosystem II reaction center protein M from Synechococcus sp. (strain CC9311).